A 314-amino-acid chain; its full sequence is 4-hydroxy-3-methylbut-2-enyl diphosphate reductase (314 aa).

Cysteine 12 provides a ligand contact to [4Fe-4S] cluster. The (2E)-4-hydroxy-3-methylbut-2-enyl diphosphate site is built by histidine 41 and histidine 74. Dimethylallyl diphosphate-binding residues include histidine 41 and histidine 74. Isopentenyl diphosphate contacts are provided by histidine 41 and histidine 74. Cysteine 96 serves as a coordination point for [4Fe-4S] cluster. Histidine 124 contributes to the (2E)-4-hydroxy-3-methylbut-2-enyl diphosphate binding site. Histidine 124 is a binding site for dimethylallyl diphosphate. Isopentenyl diphosphate is bound at residue histidine 124. Residue glutamate 126 is the Proton donor of the active site. Residue threonine 167 coordinates (2E)-4-hydroxy-3-methylbut-2-enyl diphosphate. Cysteine 197 contributes to the [4Fe-4S] cluster binding site. (2E)-4-hydroxy-3-methylbut-2-enyl diphosphate-binding residues include serine 225, serine 226, asparagine 227, and serine 269. Dimethylallyl diphosphate-binding residues include serine 225, serine 226, asparagine 227, and serine 269. 4 residues coordinate isopentenyl diphosphate: serine 225, serine 226, asparagine 227, and serine 269.

Belongs to the IspH family. [4Fe-4S] cluster serves as cofactor.

The catalysed reaction is isopentenyl diphosphate + 2 oxidized [2Fe-2S]-[ferredoxin] + H2O = (2E)-4-hydroxy-3-methylbut-2-enyl diphosphate + 2 reduced [2Fe-2S]-[ferredoxin] + 2 H(+). The enzyme catalyses dimethylallyl diphosphate + 2 oxidized [2Fe-2S]-[ferredoxin] + H2O = (2E)-4-hydroxy-3-methylbut-2-enyl diphosphate + 2 reduced [2Fe-2S]-[ferredoxin] + 2 H(+). It participates in isoprenoid biosynthesis; dimethylallyl diphosphate biosynthesis; dimethylallyl diphosphate from (2E)-4-hydroxy-3-methylbutenyl diphosphate: step 1/1. The protein operates within isoprenoid biosynthesis; isopentenyl diphosphate biosynthesis via DXP pathway; isopentenyl diphosphate from 1-deoxy-D-xylulose 5-phosphate: step 6/6. In terms of biological role, catalyzes the conversion of 1-hydroxy-2-methyl-2-(E)-butenyl 4-diphosphate (HMBPP) into a mixture of isopentenyl diphosphate (IPP) and dimethylallyl diphosphate (DMAPP). Acts in the terminal step of the DOXP/MEP pathway for isoprenoid precursor biosynthesis. The protein is 4-hydroxy-3-methylbut-2-enyl diphosphate reductase of Histophilus somni (strain 2336) (Haemophilus somnus).